Consider the following 239-residue polypeptide: Phosphoglycolate phosphatase (239 aa).

Residue Asp14 is the Nucleophile of the active site. Positions 14 and 16 each coordinate Mg(2+). Lys160 lines the substrate pocket. Mg(2+)-binding residues include Asp183 and Asp187.

This sequence belongs to the archaeal SPP-like hydrolase family. Mg(2+) serves as cofactor.

It carries out the reaction 2-phosphoglycolate + H2O = glycolate + phosphate. Its function is as follows. Catalyzes the dephosphorylation of 2-phosphoglycolate. This is Phosphoglycolate phosphatase from Aeropyrum pernix (strain ATCC 700893 / DSM 11879 / JCM 9820 / NBRC 100138 / K1).